Reading from the N-terminus, the 828-residue chain is Chitin synthase 7 (828 aa).

6 helical membrane-spanning segments follow: residues 17–37 (VIVG…VAAF), 57–77 (AVVV…IMVV), 95–115 (VGLQ…PWLF), 444–464 (FMQN…LAIL), 473–493 (LPVG…IYFG), and 501–521 (IWLY…YMVY). An N-linked (GlcNAc...) asparagine glycan is attached at N615. Low complexity-rich tracts occupy residues 740–752 (SLVS…SNSN) and 813–822 (SNNDPNNSNS). Disordered stretches follow at residues 740-780 (SLVS…LGRA) and 793-828 (LEIG…HQQR). N-linked (GlcNAc...) asparagine glycosylation occurs at N818.

This sequence belongs to the chitin synthase family. Class VII subfamily.

The protein localises to the membrane. The catalysed reaction is [(1-&gt;4)-N-acetyl-beta-D-glucosaminyl](n) + UDP-N-acetyl-alpha-D-glucosamine = [(1-&gt;4)-N-acetyl-beta-D-glucosaminyl](n+1) + UDP + H(+). In terms of biological role, polymerizes chitin, a structural polymer of the cell wall and septum, by transferring the sugar moiety of UDP-GlcNAc to the non-reducing end of the growing chitin polymer. Required for normal appressorial chitin content and for the normal formation and function of these infection structures. The protein is Chitin synthase 7 of Pyricularia oryzae (strain 70-15 / ATCC MYA-4617 / FGSC 8958) (Rice blast fungus).